The primary structure comprises 304 residues: Tyrosine recombinase XerD (304 aa).

Positions 1–92 (MKARVLAKTW…VARGLHKFAL (92 aa)) constitute a Core-binding (CB) domain. In terms of domain architecture, Tyr recombinase spans 113–298 (HLPDTLSINE…TADSLREVWR (186 aa)). Active-site residues include Arg-156, Lys-180, His-250, Arg-253, and His-276. Tyr-285 serves as the catalytic O-(3'-phospho-DNA)-tyrosine intermediate.

The protein belongs to the 'phage' integrase family. XerD subfamily. Forms a cyclic heterotetrameric complex composed of two molecules of XerC and two molecules of XerD.

The protein resides in the cytoplasm. In terms of biological role, site-specific tyrosine recombinase, which acts by catalyzing the cutting and rejoining of the recombining DNA molecules. The XerC-XerD complex is essential to convert dimers of the bacterial chromosome into monomers to permit their segregation at cell division. It also contributes to the segregational stability of plasmids. This is Tyrosine recombinase XerD from Corynebacterium glutamicum (strain ATCC 13032 / DSM 20300 / JCM 1318 / BCRC 11384 / CCUG 27702 / LMG 3730 / NBRC 12168 / NCIMB 10025 / NRRL B-2784 / 534).